Here is a 427-residue protein sequence, read N- to C-terminus: Homeobox protein knotted-1-like 3 (427 aa).

Disordered regions lie at residues 19–49 and 272–291; these read QTHH…QPAP and TGVS…EDDQ. The segment covering 272 to 284 has biased composition (polar residues); sequence TGVSPGEGTSATM. The ELK domain occupies 330 to 350; sequence ELKHELKQGYKEKIVDIREEI. A DNA-binding region (homeobox; TALE-type) is located at residues 351 to 414; sequence LRKRRAGKLP…NQRKRNWHSN (64 aa).

This sequence belongs to the TALE/KNOX homeobox family. Maximally expressed in sepals, petals and fully expanded leaves. Also expressed in other flower organs and in developing leaves. Low level expression in stem internodes.

It localises to the nucleus. This chain is Homeobox protein knotted-1-like 3, found in Malus domestica (Apple).